Consider the following 149-residue polypeptide: Heat shock protein beta-3 (149 aa).

One can recognise a sHSP domain in the interval 47–149; it reads KARAAQAPPV…VEVKDSAGTK (103 aa).

This sequence belongs to the small heat shock protein (HSP20) family.

Its subcellular location is the cytoplasm. The protein localises to the nucleus. In terms of biological role, inhibitor of actin polymerization. This is Heat shock protein beta-3 (HSPB3) from Bos taurus (Bovine).